The sequence spans 246 residues: Sugar fermentation stimulation protein homolog (246 aa).

It belongs to the SfsA family.

In Prochlorococcus marinus (strain MIT 9301), this protein is Sugar fermentation stimulation protein homolog.